A 587-amino-acid chain; its full sequence is Sedolisin (587 aa).

A signal peptide spans 1–32 (MKSSAAKQTVLCLNRYAVVALPLAIASFAAFG). The propeptide at 33 to 215 (ASPASTLWAP…VGERSAAKTL (183 aa)) is removed in mature form. Residues 219 to 583 (TAKGHNPTEF…AKLSAYIRSN (365 aa)) form the Peptidase S53 domain. Residues 276–295 (TIQTGSSNGDYSDDQQGQGE) are disordered. Catalysis depends on charge relay system residues glutamate 295 and aspartate 299. Cysteine 352 and cysteine 391 are oxidised to a cystine. The active-site Charge relay system is serine 502. 5 residues coordinate Ca(2+): aspartate 543, valine 544, glycine 559, glycine 561, and aspartate 563. A propeptide spans 586–587 (GH) (removed in mature form).

Ca(2+) serves as cofactor. In terms of processing, autocatalytically processed.

It localises to the periplasm. The enzyme catalyses Hydrolysis of the B chain of insulin at 13-Glu-|-Ala-14, 15-Leu-|-Tyr-16 and 25-Phe-|-Tyr-26 and angiotensin I at 4-Tyr-|-Ile-5. A good synthetic substrate is Lys-Pro-Ile-Glu-Phe-|-Phe(NO2)-Arg-Leu.. Inhibited by 1,2-epoxy-3-(p-nitrophenoxy)propane (EPNP), but not by carboxyl proteinase inhibitors, such as pepstatin, pepstatin Ac (S-PI) and diazoacetyl-DL-norleucine methyl ester (DAN). Inhibited by tyrostatin, pseudo-tyrostatin, AcIPF, AcIAF, chymostatin and pseudo-iodotyrostatin. Functionally, pepstatin-insensitive serine-carboxyl proteinase. In vitro can hydrolyze various synthetic peptides. Also shows activity on acid-denatured hemoglobin and on casein. The protein is Sedolisin (pcp) of Pseudomonas sp. (strain 101) (Achromobacter parvulus T1).